Reading from the N-terminus, the 132-residue chain is NADH-quinone oxidoreductase subunit A (132 aa).

The next 3 membrane-spanning stretches (helical) occupy residues 14 to 34 (FFTFFFIAVSICVFMLSISWI), 66 to 86 (FYLVAIYFVLFDVEALYLYAW), and 96 to 116 (IGFIEALIFILFLLSGLIYLI).

It belongs to the complex I subunit 3 family. As to quaternary structure, NDH-1 is composed of 13 different subunits. Subunits NuoA, H, J, K, L, M, N constitute the membrane sector of the complex.

The protein localises to the cell membrane. The catalysed reaction is a quinone + NADH + 5 H(+)(in) = a quinol + NAD(+) + 4 H(+)(out). In terms of biological role, NDH-1 shuttles electrons from NADH, via FMN and iron-sulfur (Fe-S) centers, to quinones in the respiratory chain. The immediate electron acceptor for the enzyme in this species is believed to be ubiquinone. Couples the redox reaction to proton translocation (for every two electrons transferred, four hydrogen ions are translocated across the cytoplasmic membrane), and thus conserves the redox energy in a proton gradient. In Buchnera aphidicola subsp. Baizongia pistaciae (strain Bp), this protein is NADH-quinone oxidoreductase subunit A.